A 290-amino-acid chain; its full sequence is MQIPFHTVGLVGKYDNQGMEASVRALAEFLRGRGHAVVLACQTAEHFGITDFPTRNLHDLATESDAVVVLGGDGTMLSIARELSAHGVPLIGINQGRLGFLTDITVDHMYDAVDEILSGQYVAEERILLKGQILRGGERVFEATAFNDVVVGKGGSGRLIDLEIAIDGEFVYSQRADGLVVTTPTGTTAYALSAGGPIVHPTLEAVALVPICPHTLSARPIVVSGRSRIELHLTYADDARVHFDGQHHFDLQSGDHVWITRANRPITLLHPHSYSYYDTLRQKLHWGKKL.

Catalysis depends on D73, which acts as the Proton acceptor. NAD(+)-binding positions include 73-74 (DG), 147-148 (ND), R158, R175, D177, 188-193 (TAYALS), and Q246.

It belongs to the NAD kinase family. A divalent metal cation is required as a cofactor.

The protein resides in the cytoplasm. The enzyme catalyses NAD(+) + ATP = ADP + NADP(+) + H(+). In terms of biological role, involved in the regulation of the intracellular balance of NAD and NADP, and is a key enzyme in the biosynthesis of NADP. Catalyzes specifically the phosphorylation on 2'-hydroxyl of the adenosine moiety of NAD to yield NADP. This chain is NAD kinase, found in Thiobacillus denitrificans (strain ATCC 25259 / T1).